A 705-amino-acid polypeptide reads, in one-letter code: DNA polymerase alpha subunit B (705 aa).

The segment at 115–199 is disordered; that stretch reads KKRKLHGPFS…TPTTSRQNVP (85 aa). Polar residues predominate over residues 125-134; it reads LSDSKQTYNV. Serine 126 is modified (phosphoserine). Residues 181-197 show a composition bias toward low complexity; sequence STFQTPTTNTPTTSRQN.

This sequence belongs to the DNA polymerase alpha subunit B family. As to quaternary structure, DNA polymerase alpha:primase is a four subunit enzyme complex, which is assembled throughout the cell cycle, and consists of the two DNA polymerase subunits A POL1 and B POL12, and the DNA primase large PRI2 and small PRI1 subunits. Subunit B POL12 binds to subunit A POL1. Phosphorylated in a cell cycle-dependent manner.

Its subcellular location is the nucleus. Its function is as follows. Non-catalytic component of DNA polymerase alpha, which in a complex with DNA primase (DNA polymerase alpha:primase) constitutes a replicative polymerase. POL12 may play an essential role at the early stage of chromosomal DNA replication by coupling DNA polymerase alpha to the cellular replication machinery. Interacts with MCM10. This is DNA polymerase alpha subunit B (POL12) from Saccharomyces cerevisiae (strain ATCC 204508 / S288c) (Baker's yeast).